A 447-amino-acid chain; its full sequence is Phosphoglucosamine mutase (447 aa).

Residue Ser103 is the Phosphoserine intermediate of the active site. Residues Ser103, Asp242, Asp244, and Asp246 each contribute to the Mg(2+) site. The residue at position 103 (Ser103) is a Phosphoserine.

The protein belongs to the phosphohexose mutase family. Mg(2+) is required as a cofactor. Post-translationally, activated by phosphorylation.

The catalysed reaction is alpha-D-glucosamine 1-phosphate = D-glucosamine 6-phosphate. Functionally, catalyzes the conversion of glucosamine-6-phosphate to glucosamine-1-phosphate. The chain is Phosphoglucosamine mutase from Marinobacter nauticus (strain ATCC 700491 / DSM 11845 / VT8) (Marinobacter aquaeolei).